Here is a 157-residue protein sequence, read N- to C-terminus: MKEIVLAGGCFWGVEEYISRIQGIVKTKVGYANGTKENPSYEEVCSGVTRHAEACYIKYDESIISLEELLNKFWSIIDPTVLNKQGNDRGTQYRTGIFYLDEKDLNLIIKSKSQEKKNYRKPIVTEVEPLKCFYEAEEYHQKYLKKNPGGYCHIHLD.

Residue Cys-10 is part of the active site.

The protein belongs to the MsrA Met sulfoxide reductase family.

It catalyses the reaction L-methionyl-[protein] + [thioredoxin]-disulfide + H2O = L-methionyl-(S)-S-oxide-[protein] + [thioredoxin]-dithiol. It carries out the reaction [thioredoxin]-disulfide + L-methionine + H2O = L-methionine (S)-S-oxide + [thioredoxin]-dithiol. Has an important function as a repair enzyme for proteins that have been inactivated by oxidation. Catalyzes the reversible oxidation-reduction of methionine sulfoxide in proteins to methionine. In Clostridium botulinum (strain Loch Maree / Type A3), this protein is Peptide methionine sulfoxide reductase MsrA.